The sequence spans 391 residues: Winged helix repair factor 1 (391 aa).

2 stretches are compositionally biased toward low complexity: residues 1-24 (MNIK…PSPI) and 49-63 (LSFN…SNIN). Positions 1–95 (MNIKRNQNNS…SITTTTATST (95 aa)) are disordered. Over residues 64–74 (GEEDNDDDDRE) the composition is skewed to acidic residues. Residues 82–95 (NPNPSITTTTATST) are compositionally biased toward low complexity.

It belongs to the STK19 family.

It localises to the nucleus. DNA-binding protein which is required for efficient transcription-coupled nucleotide excision repair. This chain is Winged helix repair factor 1, found in Dictyostelium discoideum (Social amoeba).